A 483-amino-acid polypeptide reads, in one-letter code: Dual specificity protein kinase CLK1 (483 aa).

The interval 1 to 49 (MRHSKRTYCPDWDERDWDYGTWRSSSSHKRKKRSHSSAREQKRCRYDHS) is disordered. The segment covering 26-36 (SSHKRKKRSHS) has biased composition (basic residues). Positions 29–33 (KRKKR) match the Nuclear localization signal motif. Residues 37–49 (SAREQKRCRYDHS) are compositionally biased toward basic and acidic residues. At Ser61 the chain carries Phosphoserine. Positions 84–111 (EPGHPYGEPGSRYQMHSSKSSGRSGRSS) are enriched in low complexity. The segment at 84–146 (EPGHPYGEPG…SRSVEDDEEG (63 aa)) is disordered. A compositionally biased stretch (basic residues) spans 112–137 (YKSKHRSRHHTSQHHSHGKSHRRKRS). The residue at position 139 (Ser139) is a Phosphoserine. Residues 160 to 476 (YEIVDTLGEG…LKEALKHPFF (317 aa)) form the Protein kinase domain. ATP contacts are provided by residues 166 to 174 (LGEGAFGKV) and Lys190. The active-site Proton acceptor is the Asp287.

This sequence belongs to the protein kinase superfamily. CMGC Ser/Thr protein kinase family. Lammer subfamily. As to quaternary structure, interacts with PPIG and UBL5. Post-translationally, autophosphorylates on all three types of residues.

The protein resides in the nucleus. It catalyses the reaction L-seryl-[protein] + ATP = O-phospho-L-seryl-[protein] + ADP + H(+). The catalysed reaction is L-threonyl-[protein] + ATP = O-phospho-L-threonyl-[protein] + ADP + H(+). It carries out the reaction L-tyrosyl-[protein] + ATP = O-phospho-L-tyrosyl-[protein] + ADP + H(+). Regulates splicing of its own pre-mRNA according to its kinase activity; increased expression of the catalytically active form influences splicing to generate the catalytically inactive splicing variant lacking the kinase domain. Leucettine L41 inhibits its kinase activity and affects the regulation of alternative splicing mediated by phosphorylation of SR proteins. Dual specificity kinase acting on both serine/threonine and tyrosine-containing substrates. Phosphorylates serine- and arginine-rich (SR) proteins of the spliceosomal complex and may be a constituent of a network of regulatory mechanisms that enable SR proteins to control RNA splicing. Phosphorylates: SRSF1, SRSF3 and PTPN1. Regulates the alternative splicing of tissue factor (F3) pre-mRNA in endothelial cells. The protein is Dual specificity protein kinase CLK1 of Mus musculus (Mouse).